The sequence spans 507 residues: Eukaryotic translation initiation factor 4E-binding protein Mextli homolog (507 aa).

A disordered region spans residues 126–163; that stretch reads RPEGQHDPAPTVGIPPSATSPPTQVTSSVTSPVPSSPQ. The span at 140-158 shows a compositional bias: low complexity; that stretch reads PPSATSPPTQVTSSVTSPV. Residues 242-307 enclose the KH domain; sequence QLRHEMIIRN…EDIERAKDMI (66 aa). 2 disordered regions span residues 314–360 and 395–424; these read NMSP…DEDI and ARPSAEEREKKKERRKSMPLQQTARDQQEP. The span at 329–348 shows a compositional bias: polar residues; it reads QYSGMSSENQSIPSQQNTAN. Positions 349-360 are enriched in acidic residues; that stretch reads IDEDDDDDDEDI.

In terms of assembly, interacts with eukaryotic translation initiation factor ife-3.

The protein localises to the cytoplasm. In terms of biological role, plays a role in promoting translation. The sequence is that of Eukaryotic translation initiation factor 4E-binding protein Mextli homolog from Caenorhabditis elegans.